Consider the following 386-residue polypeptide: Alanine racemase (386 aa).

Lys38 functions as the Proton acceptor; specific for D-alanine in the catalytic mechanism. Residue Lys38 is modified to N6-(pyridoxal phosphate)lysine. Arg136 provides a ligand contact to substrate. Tyr267 functions as the Proton acceptor; specific for L-alanine in the catalytic mechanism. Met315 contacts substrate.

This sequence belongs to the alanine racemase family. Requires pyridoxal 5'-phosphate as cofactor.

The catalysed reaction is L-alanine = D-alanine. It participates in amino-acid biosynthesis; D-alanine biosynthesis; D-alanine from L-alanine: step 1/1. In terms of biological role, catalyzes the interconversion of L-alanine and D-alanine. May also act on other amino acids. This Clostridium perfringens (strain SM101 / Type A) protein is Alanine racemase (alr).